The chain runs to 427 residues: Serine--tRNA ligase (427 aa).

Position 231 to 233 (231 to 233) interacts with L-serine; sequence TAE. 262–264 contributes to the ATP binding site; it reads RSE. An L-serine-binding site is contributed by Glu-285. Residue 349–352 coordinates ATP; it reads EISS. Ser-385 contributes to the L-serine binding site.

The protein belongs to the class-II aminoacyl-tRNA synthetase family. Type-1 seryl-tRNA synthetase subfamily. Homodimer. The tRNA molecule binds across the dimer.

The protein resides in the cytoplasm. The catalysed reaction is tRNA(Ser) + L-serine + ATP = L-seryl-tRNA(Ser) + AMP + diphosphate + H(+). It carries out the reaction tRNA(Sec) + L-serine + ATP = L-seryl-tRNA(Sec) + AMP + diphosphate + H(+). It participates in aminoacyl-tRNA biosynthesis; selenocysteinyl-tRNA(Sec) biosynthesis; L-seryl-tRNA(Sec) from L-serine and tRNA(Sec): step 1/1. Functionally, catalyzes the attachment of serine to tRNA(Ser). Is also able to aminoacylate tRNA(Sec) with serine, to form the misacylated tRNA L-seryl-tRNA(Sec), which will be further converted into selenocysteinyl-tRNA(Sec). The protein is Serine--tRNA ligase of Rhizobium leguminosarum bv. trifolii (strain WSM2304).